Here is a 161-residue protein sequence, read N- to C-terminus: Allophycocyanin alpha chain (161 aa).

N4-methylasparagine is present on asparagine 71. Cysteine 81 provides a ligand contact to (2R,3E)-phycocyanobilin.

This sequence belongs to the phycobiliprotein family. In terms of assembly, heterodimer of an alpha and a beta chain. Contains one covalently linked phycocyanobilin chromophore.

Its subcellular location is the cellular thylakoid membrane. Light-harvesting photosynthetic bile pigment-protein from the phycobiliprotein complex. Allophycocyanin has a maximum absorption at approximately 650 nanometers. This is Allophycocyanin alpha chain (apcA) from Thermosynechococcus vestitus (strain NIES-2133 / IAM M-273 / BP-1).